A 154-amino-acid chain; its full sequence is SsrA-binding protein (154 aa).

This sequence belongs to the SmpB family.

The protein resides in the cytoplasm. Its function is as follows. Required for rescue of stalled ribosomes mediated by trans-translation. Binds to transfer-messenger RNA (tmRNA), required for stable association of tmRNA with ribosomes. tmRNA and SmpB together mimic tRNA shape, replacing the anticodon stem-loop with SmpB. tmRNA is encoded by the ssrA gene; the 2 termini fold to resemble tRNA(Ala) and it encodes a 'tag peptide', a short internal open reading frame. During trans-translation Ala-aminoacylated tmRNA acts like a tRNA, entering the A-site of stalled ribosomes, displacing the stalled mRNA. The ribosome then switches to translate the ORF on the tmRNA; the nascent peptide is terminated with the 'tag peptide' encoded by the tmRNA and targeted for degradation. The ribosome is freed to recommence translation, which seems to be the essential function of trans-translation. This chain is SsrA-binding protein, found in Staphylococcus aureus (strain USA300).